The sequence spans 468 residues: Malate-2H(+)/Na(+)-lactate antiporter (468 aa).

Helical transmembrane passes span 9–29 (LFEI…FTVF), 30–50 (LDLP…LLGI), 73–93 (AVLI…GGVV), 96–116 (LIYY…TLII), 136–156 (IAMI…AGAI), 192–212 (LYLS…VGFM), 233–253 (TFDI…LLAM), 258–278 (MPVI…FQGM), 309–329 (IVGM…GGLL), 357–377 (LIVA…LILT), 405–425 (LTSG…ILGV), and 428–448 (FSYL…IIYG).

It belongs to the NhaC Na(+)/H(+) (TC 2.A.35) antiporter family.

It is found in the cell membrane. Its function is as follows. Couples proton uptake and Na(+) efflux to the substrate-product malate/lactate antiport, in an electroneutral malate-2H(+)/Na(+)-lactate exchange. Plays a role in supporting growth to high density on malate at reduced protonmotive force. In Bacillus subtilis (strain 168), this protein is Malate-2H(+)/Na(+)-lactate antiporter (mleN).